The following is a 252-amino-acid chain: 3-deoxy-manno-octulosonate cytidylyltransferase (252 aa).

It belongs to the KdsB family.

Its subcellular location is the cytoplasm. The enzyme catalyses 3-deoxy-alpha-D-manno-oct-2-ulosonate + CTP = CMP-3-deoxy-beta-D-manno-octulosonate + diphosphate. It participates in nucleotide-sugar biosynthesis; CMP-3-deoxy-D-manno-octulosonate biosynthesis; CMP-3-deoxy-D-manno-octulosonate from 3-deoxy-D-manno-octulosonate and CTP: step 1/1. It functions in the pathway bacterial outer membrane biogenesis; lipopolysaccharide biosynthesis. Activates KDO (a required 8-carbon sugar) for incorporation into bacterial lipopolysaccharide in Gram-negative bacteria. The polypeptide is 3-deoxy-manno-octulosonate cytidylyltransferase (Phocaeicola vulgatus (strain ATCC 8482 / DSM 1447 / JCM 5826 / CCUG 4940 / NBRC 14291 / NCTC 11154) (Bacteroides vulgatus)).